The chain runs to 51 residues: ATP synthase subunit epsilon-like protein, mitochondrial (51 aa).

K21 bears the N6-acetyllysine mark.

It belongs to the eukaryotic ATPase epsilon family. As to quaternary structure, F-type ATPases have 2 components, CF(1) - the catalytic core - and CF(0) - the membrane proton channel. CF(1) has five subunits: alpha(3), beta(3), gamma(1), delta(1), epsilon(1). CF(0) seems to have nine subunits: a, b, c, d, e, f, g, F6 and 8 (or A6L).

It localises to the mitochondrion inner membrane. Functionally, mitochondrial membrane ATP synthase (F(1)F(0) ATP synthase or Complex V) produces ATP from ADP in the presence of a proton gradient across the membrane which is generated by electron transport complexes of the respiratory chain. F-type ATPases consist of two structural domains, F(1) - containing the extramembraneous catalytic core, and F(0) - containing the membrane proton channel, linked together by a central stalk and a peripheral stalk. During catalysis, ATP synthesis in the catalytic domain of F(1) is coupled via a rotary mechanism of the central stalk subunits to proton translocation. Part of the complex F(1) domain and of the central stalk which is part of the complex rotary element. Rotation of the central stalk against the surrounding alpha(3)beta(3) subunits leads to hydrolysis of ATP in three separate catalytic sites on the beta subunits. In Homo sapiens (Human), this protein is ATP synthase subunit epsilon-like protein, mitochondrial.